Here is a 545-residue protein sequence, read N- to C-terminus: Chaperonin GroEL 1 (545 aa).

Residues 29 to 32, 86 to 90, Gly-413, 479 to 481, and Asp-495 contribute to the ATP site; these read TLGP, DGTTT, and DAA. The interval 525–545 is disordered; sequence PEPKENNPAGSGAGMGGDFDY. A compositionally biased stretch (gly residues) spans 535–545; it reads SGAGMGGDFDY.

The protein belongs to the chaperonin (HSP60) family. In terms of assembly, forms a cylinder of 14 subunits composed of two heptameric rings stacked back-to-back. Interacts with the co-chaperonin GroES.

Its subcellular location is the cytoplasm. The enzyme catalyses ATP + H2O + a folded polypeptide = ADP + phosphate + an unfolded polypeptide.. In terms of biological role, together with its co-chaperonin GroES, plays an essential role in assisting protein folding. The GroEL-GroES system forms a nano-cage that allows encapsulation of the non-native substrate proteins and provides a physical environment optimized to promote and accelerate protein folding. The polypeptide is Chaperonin GroEL 1 (Thermosynechococcus vestitus (strain NIES-2133 / IAM M-273 / BP-1)).